The sequence spans 246 residues: NAD-dependent protein deacetylase (246 aa).

A Deacetylase sirtuin-type domain is found at 1-246; sequence MKKPDIQQLK…VIEEIVNSNS (246 aa). Residues A25, F36, R37, Q106, I108, D109, and H124 each contribute to the NAD(+) site. Residue F36 coordinates nicotinamide. Positions 108 and 109 each coordinate nicotinamide. The Proton acceptor role is filled by H124. Residues C132, C135, C152, and C155 each contribute to the Zn(2+) site. NAD(+) is bound by residues S193, S194, N216, and D233.

The protein belongs to the sirtuin family. Class U subfamily. Zn(2+) is required as a cofactor.

Its subcellular location is the cytoplasm. It carries out the reaction N(6)-acetyl-L-lysyl-[protein] + NAD(+) + H2O = 2''-O-acetyl-ADP-D-ribose + nicotinamide + L-lysyl-[protein]. Functionally, NAD-dependent protein deacetylase which modulates the activities of several enzymes which are inactive in their acetylated form. This Staphylococcus epidermidis (strain ATCC 35984 / DSM 28319 / BCRC 17069 / CCUG 31568 / BM 3577 / RP62A) protein is NAD-dependent protein deacetylase.